Consider the following 364-residue polypeptide: Uroporphyrinogen decarboxylase (364 aa).

Arg34, Ala36, Arg38, Arg47, Asp83, Tyr161, Ser216, and His336 together coordinate coproporphyrinogen I. Residues Arg34, Ala36, and Arg38 each contribute to the coproporphyrinogen III site. Coproporphyrinogen III contacts are provided by Asp83, Tyr161, Ser216, and His336.

Belongs to the uroporphyrinogen decarboxylase family. As to quaternary structure, homodimer.

The protein resides in the cytoplasm. Its subcellular location is the cytosol. It carries out the reaction uroporphyrinogen III + 4 H(+) = coproporphyrinogen III + 4 CO2. The enzyme catalyses uroporphyrinogen I + 4 H(+) = coproporphyrinogen I + 4 CO2. It participates in porphyrin-containing compound metabolism; protoporphyrin-IX biosynthesis; coproporphyrinogen-III from 5-aminolevulinate: step 4/4. Its function is as follows. Catalyzes the sequential decarboxylation of the four acetate side chains of uroporphyrinogen to form coproporphyrinogen and participates in the fifth step in the heme biosynthetic pathway. Isomer I or isomer III of uroporphyrinogen may serve as substrate, but only coproporphyrinogen III can ultimately be converted to heme. In vitro also decarboxylates pentacarboxylate porphyrinogen I. The chain is Uroporphyrinogen decarboxylase from Rattus norvegicus (Rat).